The following is a 143-amino-acid chain: Nucleoside diphosphate kinase (143 aa).

Residues K11, F59, R87, T93, R104, and N114 each contribute to the ATP site. Catalysis depends on H117, which acts as the Pros-phosphohistidine intermediate.

The protein belongs to the NDK family. In terms of assembly, homotetramer. Mg(2+) serves as cofactor.

It localises to the cytoplasm. The catalysed reaction is a 2'-deoxyribonucleoside 5'-diphosphate + ATP = a 2'-deoxyribonucleoside 5'-triphosphate + ADP. The enzyme catalyses a ribonucleoside 5'-diphosphate + ATP = a ribonucleoside 5'-triphosphate + ADP. Functionally, major role in the synthesis of nucleoside triphosphates other than ATP. The ATP gamma phosphate is transferred to the NDP beta phosphate via a ping-pong mechanism, using a phosphorylated active-site intermediate. In Erwinia tasmaniensis (strain DSM 17950 / CFBP 7177 / CIP 109463 / NCPPB 4357 / Et1/99), this protein is Nucleoside diphosphate kinase.